The following is a 100-amino-acid chain: Small ribosomal subunit protein uS14 (100 aa).

It belongs to the universal ribosomal protein uS14 family. Part of the 30S ribosomal subunit. Contacts proteins S3 and S10.

Its function is as follows. Binds 16S rRNA, required for the assembly of 30S particles and may also be responsible for determining the conformation of the 16S rRNA at the A site. This chain is Small ribosomal subunit protein uS14, found in Synechococcus sp. (strain CC9605).